The chain runs to 164 residues: Peptidyl-prolyl cis-trans isomerase A-like 4A (164 aa).

Residues F7–Q163 enclose the PPIase cyclophilin-type domain.

It belongs to the cyclophilin-type PPIase family. PPIase A subfamily. As to expression, highly expressed in brain, ovary and mammary gland. Moderately expressed in lung, salivary gland, kidney, skin, adipose tissue, intestine and spleen. Weakly expressed in skeletal muscle, liver and stomach. Expressed in pleiomorphic and undifferentiated liposarcomas, osteosarcomas and breast carcinomas.

Its subcellular location is the cytoplasm. It catalyses the reaction [protein]-peptidylproline (omega=180) = [protein]-peptidylproline (omega=0). Functionally, PPIases accelerate the folding of proteins. It catalyzes the cis-trans isomerization of proline imidic peptide bonds in oligopeptides. The chain is Peptidyl-prolyl cis-trans isomerase A-like 4A from Homo sapiens (Human).